The primary structure comprises 127 residues: Fluoride-specific ion channel FluC (127 aa).

The next 4 helical transmembrane spans lie at 7-27 (LILISSGAALGASLRWGMGLI), 37-57 (FGTLIANYLGCFIIGLIMAMI), 69-89 (LFMITGFLGSLTTFSSFSAEV), and 102-122 (LGIMSAHLFGCLIFTGIGVLI). 2 residues coordinate Na(+): Gly-77 and Thr-80.

Belongs to the fluoride channel Fluc/FEX (TC 1.A.43) family.

The protein resides in the cell inner membrane. The catalysed reaction is fluoride(in) = fluoride(out). Na(+) is not transported, but it plays an essential structural role and its presence is essential for fluoride channel function. Functionally, fluoride-specific ion channel. Important for reducing fluoride concentration in the cell, thus reducing its toxicity. The protein is Fluoride-specific ion channel FluC of Mannheimia succiniciproducens (strain KCTC 0769BP / MBEL55E).